Consider the following 300-residue polypeptide: MLYLIGLGLSYKSDITVRGLEAIKKCSRVYLEHYTSILMAASQEELESYYGKEIILADRELVETGSKQILNNADKEDVAFLVVGDPFGATTHTDLVLRAKREAIPVEIIHNASVMNAVGACGLQLYNFGQTVSMVFFTDNWRPDSWYDKIWENRKIGLHTLVLLDIKVKEQSIENMARGRLIYEPPRYMSIAQCCEQLLEIEEKRGTKAYTPDTPAVAISRLGSSSQSFKSGTISELANYDSGEPLHSLVILGRQCHELELEYLLEFADDKEKFGKDVANDQEYFKPAAWVPPTEDDSDE.

S-adenosyl-L-methionine contacts are provided by residues Leu9, Asp85, Gly88, 113–114 (SV), and Leu164. Ser172 is subject to Phosphoserine. 2 residues coordinate S-adenosyl-L-methionine: Leu222 and His247. At Ser298 the chain carries Phosphoserine.

The protein belongs to the diphthine synthase family.

It localises to the cytoplasm. The enzyme catalyses 2-[(3S)-amino-3-carboxypropyl]-L-histidyl-[translation elongation factor 2] + 4 S-adenosyl-L-methionine = diphthine methyl ester-[translation elongation factor 2] + 4 S-adenosyl-L-homocysteine + 3 H(+). It functions in the pathway protein modification; peptidyl-diphthamide biosynthesis. Its function is as follows. S-adenosyl-L-methionine-dependent methyltransferase that catalyzes four methylations of the modified target histidine residue in translation elongation factor 2 (EF-2), to form an intermediate called diphthine methyl ester. The four successive methylation reactions represent the second step of diphthamide biosynthesis. The chain is Diphthine methyl ester synthase (DPH5) from Saccharomyces cerevisiae (strain ATCC 204508 / S288c) (Baker's yeast).